Here is a 546-residue protein sequence, read N- to C-terminus: MSSAWKTPRGSDAMPEIMVKIIGSKHFQYLVEKPKIKENDSLKTETQTMHQKPMTDNARQMSRDTPVPINFTDQQTTDNPDDVKEKKHPENNQKSENNQKLLTGANSSRFLDGNIPSQANVHCSSVPTGDQSLSYVHGIPRRKLRDWSLEQMVRGSSDQPEDIGQSPSGTTNEDAFLLALVRRELKSRPLSSNLLEKLQKELKILDPISSGFLLQSQLSRLFLKHEVPLQLPTVKILCQRFSKRGSPEMVNYEKLLWFLNSAASDYPQQNKAAADLRKTESHGTHSQSTPPQHSSSQPEVNRSLLEILKMALRTTNGRLNIDNLNLSFRKEDRSFSGCLPLPKVRAICGKHGLYLTLSLLETLLNHQDLGYQNEIKWQNFVEMLTRASSDLLSDLPTGKNEKKAPAPPMEPEVPEMSQSKTEHMKTPEEELQPESSPAETSACKDPLKPLKIRPVSQPFVNPAVKNKAEECETWIDRFRKLENALYLCDLSNTGVLEKERARRLIHNYNLIYNLSLSPQKIDQALRRFRSGENMLLEPALRYLKEL.

3 disordered regions span residues 37 to 101 (KEND…NQKL), 269 to 300 (QNKAAADLRKTESHGTHSQSTPPQHSSSQPEV), and 392 to 443 (LSDL…TSAC). 2 stretches are compositionally biased toward basic and acidic residues: residues 81 to 93 (DDVKEKKHPENNQ) and 274 to 283 (ADLRKTESHG). Residues 284 to 298 (THSQSTPPQHSSSQP) are compositionally biased toward low complexity.

This is an uncharacterized protein from Homo sapiens (Human).